Here is a 581-residue protein sequence, read N- to C-terminus: Putative ABC transporter ATP-binding protein MM_1996 (581 aa).

Positions I10–R250 constitute an ABC transporter 1 domain. G44–S51 contributes to the ATP binding site. A disordered region spans residues G287–N309. Polar residues predominate over residues S300–N309. One can recognise an ABC transporter 2 domain in the interval V313–T541. G346–S353 is an ATP binding site.

This sequence belongs to the ABC transporter superfamily.

The protein resides in the cell membrane. Functionally, probably part of an ABC transporter complex. Responsible for energy coupling to the transport system. In Methanosarcina mazei (strain ATCC BAA-159 / DSM 3647 / Goe1 / Go1 / JCM 11833 / OCM 88) (Methanosarcina frisia), this protein is Putative ABC transporter ATP-binding protein MM_1996.